A 560-amino-acid polypeptide reads, in one-letter code: Solute carrier family 49 member A3 (560 aa).

Transmembrane regions (helical) follow at residues 30–50 (WVFL…WLSF), 70–90 (WLSL…IWIL), 100–120 (ILGA…CMVV), 125–145 (PFAF…LVIF), 166–186 (LATM…PVLV), 192–212 (IPLM…LSTI), 250–270 (VILA…SALL), 282–302 (GFSG…ALAL), 318–338 (IGLC…QLQG), 341–361 (LALA…GPVA), 379–399 (GMIF…MTAL), and 422–442 (VSLL…AVFF). The tract at residues 451–540 (AESGEPPSTR…PGRLAGRVQA (90 aa)) is disordered. The segment covering 466–481 (ADSGPGVDRGGAGRAG) has biased composition (gly residues).

The protein belongs to the major facilitator superfamily.

The protein resides in the membrane. This chain is Solute carrier family 49 member A3, found in Homo sapiens (Human).